Reading from the N-terminus, the 255-residue chain is Protein NEN4 (255 aa).

Residues 11-174 (VFFDLETNVP…DDVRMNLEVL (164 aa)) form the Exonuclease domain. Mg(2+) is bound by residues Asp14 and Glu16. His161 functions as the Proton donor/acceptor in the catalytic mechanism. Asp166 is a Mg(2+) binding site.

The cofactor is Mg(2+). As to expression, expressed in the sieve elements and phloem pole pericycle cells.

The protein resides in the nucleus. Functionally, probable exonuclease required for enuclation of sieve elements. The chain is Protein NEN4 from Arabidopsis thaliana (Mouse-ear cress).